Consider the following 403-residue polypeptide: Probable N-acetyltransferase HLS1 (403 aa).

The N-acetyltransferase domain maps to 2–177 (TVVREYDPTR…VNPVYAHRVN (176 aa)).

It belongs to the acetyltransferase family.

In terms of biological role, ethylene-responsive N-acetyltransferase required for differential cell elongation in the hypocotyl. Regulates apical hook formation of dark-grown seedlings. May control differential cell growth by regulating auxin activity. May be involved in negative feedback regulation of auxin homeostasis through the control of GH3-like genes. Modulates de novo shoot organogenesis. The protein is Probable N-acetyltransferase HLS1 (HLS1) of Arabidopsis thaliana (Mouse-ear cress).